The following is a 146-amino-acid chain: uncharacterized protein (146 aa).

Positions 86–96 are enriched in acidic residues; the sequence is EFDSPMDEEEE. The tract at residues 86–124 is disordered; it reads EFDSPMDEEEETKPREASLDQTAPKKSKKEELLVKNNNF.

This is an uncharacterized protein from Ostreid herpesvirus 1 (isolate France) (OsHV-1).